Here is a 473-residue protein sequence, read N- to C-terminus: Psoralen synthase (473 aa).

A helical membrane pass occupies residues tyrosine 1–valine 17. Residues threonine 350–valine 355 are substrate specificity. Cysteine 425 is a heme binding site.

This sequence belongs to the cytochrome P450 family. Heme serves as cofactor.

It is found in the microsome membrane. It carries out the reaction (7S)-marmesin + reduced [NADPH--hemoprotein reductase] + O2 = psoralen + acetone + oxidized [NADPH--hemoprotein reductase] + 2 H2O + H(+). The protein operates within secondary metabolite biosynthesis. In terms of biological role, involved in the biosynthesis of coumarins and furanocoumarins (FCs), natural products required for defense responses against attacks by predators with potential medical and agroindustrial usages such as anticoagulant, rodenticide and artificial vanilla substitutes. Involved in linear furanocumarin (psoralen) biosynthesis. Converts marmesin to psoralen and, with much lower affinity, 5-hydroxymarmesin to bergaptol. The sequence is that of Psoralen synthase from Pastinaca sativa (Wild parsnip).